Reading from the N-terminus, the 64-residue chain is MKASELHQKDQAALNKELSDLLKAQFGLRMQLATQQLTNTSQLKKVRRDIARVRTVLTEKANQK.

This sequence belongs to the universal ribosomal protein uL29 family.

In Paraburkholderia phytofirmans (strain DSM 17436 / LMG 22146 / PsJN) (Burkholderia phytofirmans), this protein is Large ribosomal subunit protein uL29.